The primary structure comprises 443 residues: Xaa-Pro dipeptidase (443 aa).

5 residues coordinate Mn(2+): D246, D257, H339, E384, and E423.

It belongs to the peptidase M24B family. Bacterial-type prolidase subfamily. Mn(2+) serves as cofactor.

The catalysed reaction is Xaa-L-Pro dipeptide + H2O = an L-alpha-amino acid + L-proline. In terms of biological role, splits dipeptides with a prolyl residue in the C-terminal position. The polypeptide is Xaa-Pro dipeptidase (Escherichia coli O81 (strain ED1a)).